Consider the following 261-residue polypeptide: MAGDSEQTLQNHQQPNGGEPFLIGVSGGTASGKSSVCAKIVQLLGQNEVDYHQKQVVILSQDSFYRVLTSEQKAKALKGQFNFDHPDAFDNELIFKTLKEITEGKTVQIPVYDFVSHSRKEETVTIYPADVVLFEGILAFYSQEVRDLFQMKLFVDTDADTRLSRRVLRDISERGRDLEQILSQYITFVKPAFEEFCLPTKKYADVIIPRGADNLVAINLIVQHIQDILNGGLSKRQTNGYLNGYTPSRKRQASESSSRPH.

Over residues Met1–Asn16 the composition is skewed to polar residues. The interval Met1–Gly24 is disordered. Ala2 carries the post-translational modification N-acetylalanine. Residue Gly27–Ser35 coordinates ATP. Substrate contacts are provided by Asp84, Tyr112, His117, Arg166, Arg176, and Gln184. Asp213 contributes to the ATP binding site. The segment at Gly240–His261 is disordered. Ser254 is modified (phosphoserine).

It belongs to the uridine kinase family. Homotetramer.

It catalyses the reaction uridine + ATP = UMP + ADP + H(+). It carries out the reaction cytidine + ATP = CMP + ADP + H(+). It functions in the pathway pyrimidine metabolism; CTP biosynthesis via salvage pathway; CTP from cytidine: step 1/3. It participates in pyrimidine metabolism; UMP biosynthesis via salvage pathway; UMP from uridine: step 1/1. Functionally, phosphorylates uridine and cytidine to uridine monophosphate and cytidine monophosphate. Does not phosphorylate deoxyribonucleosides or purine ribonucleosides. Can use ATP or GTP as a phosphate donor. This chain is Uridine-cytidine kinase 2 (Uck2), found in Mus musculus (Mouse).